The primary structure comprises 209 residues: Uracil phosphoribosyltransferase (209 aa).

5-phospho-alpha-D-ribose 1-diphosphate is bound by residues Arg-79, Arg-104, and 131–139 (DPMLATGGS). Residues Val-194 and 199–201 (GDA) contribute to the uracil site. Asp-200 is a 5-phospho-alpha-D-ribose 1-diphosphate binding site.

The protein belongs to the UPRTase family. Mg(2+) serves as cofactor.

It carries out the reaction UMP + diphosphate = 5-phospho-alpha-D-ribose 1-diphosphate + uracil. The protein operates within pyrimidine metabolism; UMP biosynthesis via salvage pathway; UMP from uracil: step 1/1. With respect to regulation, allosterically activated by GTP. In terms of biological role, catalyzes the conversion of uracil and 5-phospho-alpha-D-ribose 1-diphosphate (PRPP) to UMP and diphosphate. The sequence is that of Uracil phosphoribosyltransferase from Clostridium botulinum (strain ATCC 19397 / Type A).